We begin with the raw amino-acid sequence, 285 residues long: Bifunctional protein FolD (285 aa).

NADP(+) contacts are provided by residues 165-167 (GRS) and S190.

This sequence belongs to the tetrahydrofolate dehydrogenase/cyclohydrolase family. As to quaternary structure, homodimer.

It carries out the reaction (6R)-5,10-methylene-5,6,7,8-tetrahydrofolate + NADP(+) = (6R)-5,10-methenyltetrahydrofolate + NADPH. It catalyses the reaction (6R)-5,10-methenyltetrahydrofolate + H2O = (6R)-10-formyltetrahydrofolate + H(+). It functions in the pathway one-carbon metabolism; tetrahydrofolate interconversion. Catalyzes the oxidation of 5,10-methylenetetrahydrofolate to 5,10-methenyltetrahydrofolate and then the hydrolysis of 5,10-methenyltetrahydrofolate to 10-formyltetrahydrofolate. This chain is Bifunctional protein FolD, found in Streptococcus pneumoniae (strain ATCC BAA-255 / R6).